We begin with the raw amino-acid sequence, 265 residues long: Thioredoxin-related transmembrane protein 2 homolog (265 aa).

The N-terminal stretch at 1-32 (MLIPRLDEVRRALTAFHFFNTLLALAFPVIRS) is a signal peptide. Residues 33 to 96 (TSLCDYVFAV…KIAGMFLFIR (64 aa)) lie on the Extracellular side of the membrane. The chain crosses the membrane as a helical span at residues 97-117 (ADILPGIIYILACLIVTVLFP). Over 118–265 (EPVYNGPEQV…KKGAKAKKED (148 aa)) the chain is Cytoplasmic. The region spanning 126 to 230 (QVTYFQGEQL…RPLVNDSRRA (105 aa)) is the Thioredoxin domain. The Di-lysine motif motif lies at 262–265 (KKED).

Its subcellular location is the membrane. The sequence is that of Thioredoxin-related transmembrane protein 2 homolog from Caenorhabditis elegans.